The sequence spans 486 residues: Acetyl-coenzyme A carboxylase carboxyl transferase subunit beta, chloroplastic (486 aa).

Residues L224–P486 form the CoA carboxyltransferase N-terminal domain. Residues C228, C231, C247, and C250 each contribute to the Zn(2+) site. A C4-type zinc finger spans residues C228–C250.

It belongs to the AccD/PCCB family. As to quaternary structure, acetyl-CoA carboxylase is a heterohexamer composed of biotin carboxyl carrier protein, biotin carboxylase and 2 subunits each of ACCase subunit alpha and ACCase plastid-coded subunit beta (accD). It depends on Zn(2+) as a cofactor.

Its subcellular location is the plastid. It localises to the chloroplast stroma. The enzyme catalyses N(6)-carboxybiotinyl-L-lysyl-[protein] + acetyl-CoA = N(6)-biotinyl-L-lysyl-[protein] + malonyl-CoA. It functions in the pathway lipid metabolism; malonyl-CoA biosynthesis; malonyl-CoA from acetyl-CoA: step 1/1. Its function is as follows. Component of the acetyl coenzyme A carboxylase (ACC) complex. Biotin carboxylase (BC) catalyzes the carboxylation of biotin on its carrier protein (BCCP) and then the CO(2) group is transferred by the transcarboxylase to acetyl-CoA to form malonyl-CoA. This is Acetyl-coenzyme A carboxylase carboxyl transferase subunit beta, chloroplastic from Nymphaea alba (White water-lily).